Reading from the N-terminus, the 203-residue chain is MQKFNSLTSIPAYLPIVNIDTDMIIPKQFLKTIKRTGLGKNLFFEMRYDDNGNEIKDFILNQKPHNQSKILIAGKNFGCGSSREHAPWALLDFGITCVISSSYADIFYSNCFKNGILPITLPEEKIKELSEYSKRKEEISIDLNEEKIIFGNSEIKFDIDPFKKKCLLEGLDDIALSLAKKEKIITFEENLKNNKPWIFNDKN.

The protein belongs to the LeuD family. LeuD type 1 subfamily. In terms of assembly, heterodimer of LeuC and LeuD.

The enzyme catalyses (2R,3S)-3-isopropylmalate = (2S)-2-isopropylmalate. It participates in amino-acid biosynthesis; L-leucine biosynthesis; L-leucine from 3-methyl-2-oxobutanoate: step 2/4. Functionally, catalyzes the isomerization between 2-isopropylmalate and 3-isopropylmalate, via the formation of 2-isopropylmaleate. This Pelagibacter ubique (strain HTCC1062) protein is 3-isopropylmalate dehydratase small subunit.